Reading from the N-terminus, the 126-residue chain is Glycine cleavage system H protein (126 aa).

Residues 22 to 104 form the Lipoyl-binding domain; the sequence is VATIGITEYA…YEKAWMVKVE (83 aa). Lysine 63 carries the post-translational modification N6-lipoyllysine.

The protein belongs to the GcvH family. The glycine cleavage system is composed of four proteins: P, T, L and H. Requires (R)-lipoate as cofactor.

In terms of biological role, the glycine cleavage system catalyzes the degradation of glycine. The H protein shuttles the methylamine group of glycine from the P protein to the T protein. Is also involved in protein lipoylation via its role as an octanoyl/lipoyl carrier protein intermediate. This is Glycine cleavage system H protein from Staphylococcus aureus (strain MSSA476).